An 81-amino-acid polypeptide reads, in one-letter code: Acyl carrier protein (81 aa).

One can recognise a Carrier domain in the interval 1-79 (MDVAAMQVKI…DIFDYLAKNK (79 aa)). S39 carries the O-(pantetheine 4'-phosphoryl)serine modification.

It belongs to the acyl carrier protein (ACP) family. Post-translationally, 4'-phosphopantetheine is transferred from CoA to a specific serine of apo-ACP by AcpS. This modification is essential for activity because fatty acids are bound in thioester linkage to the sulfhydryl of the prosthetic group.

It localises to the cytoplasm. Its pathway is lipid metabolism; fatty acid biosynthesis. Carrier of the growing fatty acid chain in fatty acid biosynthesis. This Syntrophobacter fumaroxidans (strain DSM 10017 / MPOB) protein is Acyl carrier protein.